A 925-amino-acid chain; its full sequence is MTDASDLLSLSYSHYLARAAAARPALAERIAAWAAAPVTRAALDARLDELLAQGGQPPSEDALKKALRQLRGEAFGAVAERDLAGRADVAEVTGTMTDLAEAAIQRALALLAAELEAQYGEPRGPSGERLALGVVGMGKLGGRELNVSSDIDLIFVYEDDGETAGGARAPISVHEFFTRLGRRLIGVLSEATADGYVFRVDMRLRPNGDSGPLVCSLGMLEEYFYVQGREWERYAWIKGRLVTERASAAARRLAQQLDAIVKPFVYRRYLDFGVIGAIRSLHEQIRQEARRRATMRPDKADDIKLGRGGIREIEFSAQVFQLIRGGQDAGFRVQPTLAVLRHASASGLITEEVRAGLTHAYLFLRTLEHRLQYRNDAQTHAMPVDPAERAALAASLGFADYAALIDRLDQHRAFVEAQFDQVFADKADGGARREDDQAAGCIWSGALADDGADEALVARLAELGFADPAAVLARLQAVWRSSRYAGLPESSRVRFDRVAHRALEAAPGIDAAHRDETVVRCFDLLETVGRRGAYLALLTEYPAALRRVLSVLGATRWGGGYLIRHPQLLDELLDDEAIDSPFDWPAFKDALRRRLAAADGAEHQMDLLRHAHQAEVFRILLLDLAGRLSVEHVSDRLSELADAMLDVTIEVVWSQLAKRHRDTPCFAAIAYGKLGGKELGYASDLDLIFLYDDPDERAADVYTTFARRLITWLTTATGAGTLFDIDLRLRPNGEAGLLVTDLDAFRRYQLREGDAANTAWVWEHQALTRARYSAGDARIGAAFEAIRVQVLTTPRDAAVLAKEIVEMREKVLAGHPNTTERFDLKHDRGGMVDIEFAVQYWVLLHAARHPEMIRNTGNIALLREVSRFGLMSEEEAETVGAAYRTYRKLQHRLRLDGMEKARVEPERVAAERQAVAALWARVFGA.

An adenylyl removase region spans residues 1–426; that stretch reads MTDASDLLSL…AQFDQVFADK (426 aa). The tract at residues 436-925 is adenylyl transferase; the sequence is DQAAGCIWSG…AALWARVFGA (490 aa).

This sequence belongs to the GlnE family. Mg(2+) serves as cofactor.

It carries out the reaction [glutamine synthetase]-O(4)-(5'-adenylyl)-L-tyrosine + phosphate = [glutamine synthetase]-L-tyrosine + ADP. It catalyses the reaction [glutamine synthetase]-L-tyrosine + ATP = [glutamine synthetase]-O(4)-(5'-adenylyl)-L-tyrosine + diphosphate. Involved in the regulation of glutamine synthetase GlnA, a key enzyme in the process to assimilate ammonia. When cellular nitrogen levels are high, the C-terminal adenylyl transferase (AT) inactivates GlnA by covalent transfer of an adenylyl group from ATP to specific tyrosine residue of GlnA, thus reducing its activity. Conversely, when nitrogen levels are low, the N-terminal adenylyl removase (AR) activates GlnA by removing the adenylyl group by phosphorolysis, increasing its activity. The regulatory region of GlnE binds the signal transduction protein PII (GlnB) which indicates the nitrogen status of the cell. The polypeptide is Bifunctional glutamine synthetase adenylyltransferase/adenylyl-removing enzyme (Burkholderia mallei (strain ATCC 23344)).